A 489-amino-acid chain; its full sequence is Rhamnulokinase (489 aa).

13–17 provides a ligand contact to ATP; sequence ASSGR. Cys-68 and Cys-222 form a disulfide bridge. Substrate contacts are provided by residues Gly-83 and 236–238; that span reads HDT. Asp-237 serves as the catalytic Proton acceptor. Thr-259 provides a ligand contact to ATP. Residue Asn-296 coordinates substrate. An ATP-binding site is contributed by Gln-304. Cys-353 and Cys-370 form a disulfide bridge. Gly-402 is a binding site for ATP. Cys-413 and Cys-417 are joined by a disulfide.

The protein belongs to the rhamnulokinase family. The cofactor is Mg(2+).

The enzyme catalyses L-rhamnulose + ATP = L-rhamnulose 1-phosphate + ADP + H(+). It functions in the pathway carbohydrate degradation; L-rhamnose degradation; glycerone phosphate from L-rhamnose: step 2/3. In terms of biological role, involved in the catabolism of L-rhamnose (6-deoxy-L-mannose). Catalyzes the transfer of the gamma-phosphate group from ATP to the 1-hydroxyl group of L-rhamnulose to yield L-rhamnulose 1-phosphate. This chain is Rhamnulokinase, found in Salmonella agona (strain SL483).